The primary structure comprises 164 residues: Sec-independent protein translocase protein TatB (164 aa).

Residues 1 to 21 (MIDIGLSKMALIGAVALIVIG) form a helical membrane-spanning segment. Residues 81 to 102 (ASEFQKDWESGTSDAAATGHDG) form a disordered region.

This sequence belongs to the TatB family. As to quaternary structure, the Tat system comprises two distinct complexes: a TatABC complex, containing multiple copies of TatA, TatB and TatC subunits, and a separate TatA complex, containing only TatA subunits. Substrates initially bind to the TatABC complex, which probably triggers association of the separate TatA complex to form the active translocon.

It localises to the cell inner membrane. Functionally, part of the twin-arginine translocation (Tat) system that transports large folded proteins containing a characteristic twin-arginine motif in their signal peptide across membranes. Together with TatC, TatB is part of a receptor directly interacting with Tat signal peptides. TatB may form an oligomeric binding site that transiently accommodates folded Tat precursor proteins before their translocation. This Paracidovorax citrulli (strain AAC00-1) (Acidovorax citrulli) protein is Sec-independent protein translocase protein TatB.